The sequence spans 369 residues: DNA polymerase IV 2 (369 aa).

A UmuC domain is found at 17-201; that stretch reads VFHVDMDSFF…LPVSRIPGVG (185 aa). The Mg(2+) site is built by D21 and D119. E120 is an active-site residue.

Belongs to the DNA polymerase type-Y family. Monomer. Requires Mg(2+) as cofactor.

The protein resides in the cytoplasm. It carries out the reaction DNA(n) + a 2'-deoxyribonucleoside 5'-triphosphate = DNA(n+1) + diphosphate. In terms of biological role, poorly processive, error-prone DNA polymerase involved in untargeted mutagenesis. Copies undamaged DNA at stalled replication forks, which arise in vivo from mismatched or misaligned primer ends. These misaligned primers can be extended by PolIV. Exhibits no 3'-5' exonuclease (proofreading) activity. May be involved in translesional synthesis. This is DNA polymerase IV 2 (dbh2) from Methanosarcina mazei (strain ATCC BAA-159 / DSM 3647 / Goe1 / Go1 / JCM 11833 / OCM 88) (Methanosarcina frisia).